The sequence spans 234 residues: Nuclear ubiquitous casein and cyclin-dependent kinase substrate 1 (234 aa).

The interval Met-1–Asp-234 is disordered. Tyr-13 carries the post-translational modification Phosphotyrosine. 2 positions are modified to phosphoserine: Ser-14 and Ser-19. At Tyr-26 the chain carries Phosphotyrosine. Residues Lys-35–Gly-51 show a composition bias toward basic residues. Phosphoserine is present on residues Ser-54, Ser-58, Ser-61, Ser-73, Ser-75, and Ser-79. The segment covering Lys-64–Glu-77 has biased composition (basic and acidic residues). Over residues Gln-91–Ala-100 the composition is skewed to low complexity. Acidic residues predominate over residues Val-111 to Pro-124. Phosphoserine occurs at positions 113, 130, 132, and 144. The segment covering Ser-132 to Asp-145 has biased composition (acidic residues). Over residues Ser-149–Leu-174 the composition is skewed to basic residues. Thr-179 is modified (phosphothreonine). The residue at position 181 (Ser-181) is a Phosphoserine. Residues Gly-185–Lys-199 show a composition bias toward basic residues. Thr-202 carries the phosphothreonine modification. Residues Ser-204, Ser-214, Ser-225, and Ser-231 each carry the phosphoserine modification. The span at Glu-223–Asp-234 shows a compositional bias: acidic residues.

As to quaternary structure, does not interact with RAD51. Phosphorylated in an ATM-dependent manner in response to DNA damage. Phosphorylated by CDK1 and casein kinase.

The protein localises to the nucleus. The protein resides in the chromosome. Its function is as follows. Chromatin-associated protein involved in DNA repair by promoting homologous recombination (HR). Binds double-stranded DNA (dsDNA) and secondary DNA structures, such as D-loop structures, but with less affinity than RAD51AP1. This chain is Nuclear ubiquitous casein and cyclin-dependent kinase substrate 1 (Nucks1), found in Mus musculus (Mouse).